A 272-amino-acid chain; its full sequence is uncharacterized protein (272 aa).

This is an uncharacterized protein from Bacillus anthracis.